The chain runs to 96 residues: Large ribosomal subunit protein eL14 (96 aa).

It belongs to the eukaryotic ribosomal protein eL14 family.

This Sulfolobus acidocaldarius (strain ATCC 33909 / DSM 639 / JCM 8929 / NBRC 15157 / NCIMB 11770) protein is Large ribosomal subunit protein eL14.